The primary structure comprises 154 residues: HTAGRYQAKRFRKAQCPIVERLTNSLMMHGRNNGKKLMAVRIVKHAMEIIHLLTDLNPIQVIVDAVINSGPREDATRIGSAGVVRRQAVDISPLRRVSQAIYLLTTGARESAFRNIKTIAECLADELINAAKGSSNSYAIKKKDEIERVAKANR.

Belongs to the universal ribosomal protein uS7 family.

In Nicotiana plumbaginifolia (Leadwort-leaved tobacco), this protein is Small ribosomal subunit protein uS7 (RPS5).